A 157-amino-acid polypeptide reads, in one-letter code: Small ribosomal subunit protein uS7 (157 aa).

It belongs to the universal ribosomal protein uS7 family. In terms of assembly, part of the 30S ribosomal subunit. Contacts proteins S9 and S11.

One of the primary rRNA binding proteins, it binds directly to 16S rRNA where it nucleates assembly of the head domain of the 30S subunit. Is located at the subunit interface close to the decoding center, probably blocks exit of the E-site tRNA. The chain is Small ribosomal subunit protein uS7 from Verminephrobacter eiseniae (strain EF01-2).